The sequence spans 148 residues: Large ribosomal subunit protein bL9 (148 aa).

Belongs to the bacterial ribosomal protein bL9 family.

Its function is as follows. Binds to the 23S rRNA. The polypeptide is Large ribosomal subunit protein bL9 (Streptomyces griseus subsp. griseus (strain JCM 4626 / CBS 651.72 / NBRC 13350 / KCC S-0626 / ISP 5235)).